The sequence spans 1567 residues: Ice nucleation protein (1567 aa).

Positions 130-185 (PAAEPSAPATQATSATLPTPATPSTQATPSTQSTQSTQSTEATQSTEATPVATVAA) are enriched in low complexity. 13 disordered regions span residues 130–195 (PAAE…QQHD), 270–329 (YGST…KGSD), 356–378 (AGSESSLTAGYGSTQTARKGSDV), 449–474 (TQTSGSDSSLTAGYGSTQTARKGSDI), 502–529 (SESSLTAGYGSTQTAQQDSSLTTGYGST), 594–620 (QTAGSDSSLTAGYGSTQTAREGSDVTA), 642–668 (QTSGSDSSLTAGYGSTQTARKGSDVTA), 689–716 (TQTSGSDSSLTAGYGSTQTARKGSDVTA), 738–764 (QTSGSDSSLTAGYGSTQTARKGSDVTA), 785–810 (TQTSGSDSSLTAGYGSTQTARKGSDI), 833–860 (TQTSGSDSSLTAGYGSTQTAREGSDVTA), 929–959 (TQTSGSDSSLTAGYGSTQTARKGSDMTAGYG), and 977–1004 (TQTSGSDSSLTAGYGSTQTAREGSDVTA). Over residues 270-282 (YGSTQTAQEGSRL) the composition is skewed to polar residues. Positions 283-296 (TSGYGSTATSGSDS) are enriched in low complexity. Polar residues-rich tracts occupy residues 302 to 325 (YGSTQTAGSESSLTAGYGSTQTAR), 356 to 373 (AGSESSLTAGYGSTQTAR), 449 to 469 (TQTSGSDSSLTAGYGSTQTAR), and 502 to 519 (SESSLTAGYGSTQTAQQD). A compositionally biased stretch (low complexity) spans 520-529 (SSLTTGYGST). Polar residues-rich tracts occupy residues 594 to 613 (QTAGSDSSLTAGYGSTQTAR), 642 to 661 (QTSGSDSSLTAGYGSTQTAR), 689 to 709 (TQTSGSDSSLTAGYGSTQTAR), 738 to 757 (QTSGSDSSLTAGYGSTQTAR), 785 to 805 (TQTSGSDSSLTAGYGSTQTAR), 833 to 853 (TQTSGSDSSLTAGYGSTQTAR), 929 to 949 (TQTSGSDSSLTAGYGSTQTAR), and 977 to 997 (TQTSGSDSSLTAGYGSTQTAR).

The protein belongs to the bacterial ice nucleation protein family.

Its subcellular location is the cell outer membrane. In terms of biological role, ice nucleation proteins enable bacteria to nucleate crystallization in supercooled water. This chain is Ice nucleation protein (inaX), found in Xanthomonas campestris pv. translucens.